The sequence spans 264 residues: Small ribosomal subunit protein eS1B (264 aa).

The segment covering 1 to 19 (MALGKNKRISKGGKRGKRG) has biased composition (basic residues). The disordered stretch occupies residues 1–23 (MALGKNKRISKGGKRGKRGKAQE).

It belongs to the eukaryotic ribosomal protein eS1 family. Component of the small ribosomal subunit. Mature ribosomes consist of a small (40S) and a large (60S) subunit. The 40S subunit contains about 33 different proteins and 1 molecule of RNA (18S). The 60S subunit contains about 49 different proteins and 3 molecules of RNA (25S, 5.8S and 5S).

The protein localises to the cytoplasm. The chain is Small ribosomal subunit protein eS1B from Leishmania infantum.